We begin with the raw amino-acid sequence, 489 residues long: Dipeptide and tripeptide permease B (489 aa).

At 1 to 27 (MNTTAPTGLLQQPRPFFMIFFVELWER) the chain is on the cytoplasmic side. A helical transmembrane segment spans residues 28–48 (FGYYGVQGILAVFFVKQLGFS). The Periplasmic portion of the chain corresponds to 49–52 (QEQA). The helical transmembrane segment at 53 to 73 (FITFGAFAALVYGLISIGGYV) threads the bilayer. At 74-82 (GDHLLGTKR) the chain is on the cytoplasmic side. Residues 83 to 103 (TLVLGAIVLAIGYFMTGMSLL) form a helical membrane-spanning segment. Residues 104 to 106 (NPD) lie on the Periplasmic side of the membrane. A helical membrane pass occupies residues 107–127 (LIFIALGTIAVGNGLFKANPA). The Cytoplasmic portion of the chain corresponds to 128–146 (SLLSKCYQPKDPRLDGAFT). The chain crosses the membrane as a helical span at residues 147–167 (LFYMSINIGSLLSLSLAPVIA). Topologically, residues 168 to 172 (DKFGY) are periplasmic. The helical transmembrane segment at 173–193 (AVTYNLCGAGLIVALLVYFAC) threads the bilayer. Residues 194 to 214 (RGMVKNIGSEPDHKPLRFRNL) are Cytoplasmic-facing. A helical transmembrane segment spans residues 215–235 (LLVLLGTVVMIFLCAWLMHNV). K236 is a topological domain (periplasmic). The chain crosses the membrane as a helical span at residues 237-257 (IANLVLIVLSIVVTIFFFREA). Residues 258–267 (FRLDKTGRNK) are Cytoplasmic-facing. Residues 268–288 (MFVAFILMIEAVLFYILYAQM) form a helical membrane-spanning segment. Topologically, residues 289–315 (PTSLNFFAINNVHHEILGFAINPVSFQ) are periplasmic. The chain crosses the membrane as a helical span at residues 316-338 (ALNPFWVVVASPVLAAIYTRLGS). At 339–348 (KGKDLTMPMK) the chain is on the cytoplasmic side. A helical transmembrane segment spans residues 349–369 (FTLGMFLCALGFLTAAAGMWF). Over 370-379 (ADAQGLTSPW) the chain is Periplasmic. The chain crosses the membrane as a helical span at residues 380–400 (FIVLVYLFQSLGELLISALGL). The Cytoplasmic portion of the chain corresponds to 401–410 (AMVAALVPQH). Residues 411 to 431 (LMGFILGMWFLTQAAAFLLGG) form a helical membrane-spanning segment. Residues 432–454 (YVATFTAVPENITDPLQTLPIYT) lie on the Periplasmic side of the membrane. A helical membrane pass occupies residues 455 to 475 (GVFSKIGLVTLAVTVVMAIMV). At 476–489 (PWLNRMINTPGTEQ) the chain is on the cytoplasmic side.

The protein belongs to the major facilitator superfamily. Proton-dependent oligopeptide transporter (POT/PTR) (TC 2.A.17) family. DtpB subfamily.

The protein resides in the cell inner membrane. Functionally, proton-dependent permease that transports di- and tripeptides. This is Dipeptide and tripeptide permease B from Salmonella typhimurium (strain LT2 / SGSC1412 / ATCC 700720).